Consider the following 681-residue polypeptide: Chaperone protein HtpG (681 aa).

The interval 1 to 326 (MQKGNIGVTT…SPDIPLNVSR (326 aa)) is a; substrate-binding. The segment at 327–545 (SYLQSDSNVK…YMRRMKEMAN (219 aa)) is b. A c region spans residues 546–681 (IQAGMSFYGE…NFVKRSIELI (136 aa)). The disordered stretch occupies residues 589-620 (IQTEMNSVSKRRNELKDSQKDKKEEDIPTAEK). The segment covering 599–620 (RRNELKDSQKDKKEEDIPTAEK) has biased composition (basic and acidic residues).

This sequence belongs to the heat shock protein 90 family. As to quaternary structure, homodimer.

Its subcellular location is the cytoplasm. Molecular chaperone. Has ATPase activity. This Bacteroides thetaiotaomicron (strain ATCC 29148 / DSM 2079 / JCM 5827 / CCUG 10774 / NCTC 10582 / VPI-5482 / E50) protein is Chaperone protein HtpG.